The following is a 284-amino-acid chain: Bifunctional protein FolD (284 aa).

NADP(+)-binding positions include Gly-165 to Ser-167 and Ser-190.

The protein belongs to the tetrahydrofolate dehydrogenase/cyclohydrolase family. In terms of assembly, homodimer.

The enzyme catalyses (6R)-5,10-methylene-5,6,7,8-tetrahydrofolate + NADP(+) = (6R)-5,10-methenyltetrahydrofolate + NADPH. The catalysed reaction is (6R)-5,10-methenyltetrahydrofolate + H2O = (6R)-10-formyltetrahydrofolate + H(+). The protein operates within one-carbon metabolism; tetrahydrofolate interconversion. In terms of biological role, catalyzes the oxidation of 5,10-methylenetetrahydrofolate to 5,10-methenyltetrahydrofolate and then the hydrolysis of 5,10-methenyltetrahydrofolate to 10-formyltetrahydrofolate. The sequence is that of Bifunctional protein FolD from Streptococcus equi subsp. equi (strain 4047).